We begin with the raw amino-acid sequence, 107 residues long: Flagellar transcriptional regulator FlhD (107 aa).

It belongs to the FlhD family. As to quaternary structure, homodimer; disulfide-linked. Forms a heterohexamer composed of two FlhC and four FlhD subunits. Each FlhC binds a FlhD dimer, forming a heterotrimer, and a hexamer assembles by dimerization of two heterotrimers.

It is found in the cytoplasm. In terms of biological role, functions in complex with FlhC as a master transcriptional regulator that regulates transcription of several flagellar and non-flagellar operons by binding to their promoter region. Activates expression of class 2 flagellar genes, including fliA, which is a flagellum-specific sigma factor that turns on the class 3 genes. Also regulates genes whose products function in a variety of physiological pathways. The sequence is that of Flagellar transcriptional regulator FlhD from Bordetella avium (strain 197N).